Here is a 76-residue protein sequence, read N- to C-terminus: Toxin Acra III-1 (76 aa).

The region spanning 4–67 (PGNYPLDTRG…IWDAVKNHCT (64 aa)) is the LCN-type CS-alpha/beta domain. 3 disulfide bridges follow: Cys-18–Cys-41, Cys-27–Cys-46, and Cys-31–Cys-48.

Belongs to the long (3 C-C) scorpion toxin superfamily. Sodium channel inhibitor family. Beta subfamily. In terms of tissue distribution, expressed by the venom gland.

Its subcellular location is the secreted. Functionally, binds to sodium channels (Nav) and affects the channel activation process. This chain is Toxin Acra III-1, found in Androctonus crassicauda (Arabian fat-tailed scorpion).